The sequence spans 500 residues: Cytochrome P450 2D14 (500 aa).

Cys-446 lines the heme pocket.

The protein belongs to the cytochrome P450 family. Requires heme as cofactor.

It is found in the endoplasmic reticulum membrane. The protein resides in the microsome membrane. The enzyme catalyses an organic molecule + reduced [NADPH--hemoprotein reductase] + O2 = an alcohol + oxidized [NADPH--hemoprotein reductase] + H2O + H(+). Its function is as follows. Cytochromes P450 are a group of heme-thiolate monooxygenases. In liver microsomes, this enzyme is involved in an NADPH-dependent electron transport pathway. It oxidizes a variety of structurally unrelated compounds, including steroids, fatty acids, and xenobiotics. This is Cytochrome P450 2D14 (CYP2D14) from Bos taurus (Bovine).